A 1126-amino-acid polypeptide reads, in one-letter code: Carbamoyl phosphate synthase large chain (1126 aa).

A carboxyphosphate synthetic domain region spans residues methionine 1–aspartate 402. The ATP site is built by arginine 129, arginine 169, glycine 175, glycine 176, glutamate 208, isoleucine 210, glutamate 215, glycine 241, valine 242, histidine 243, glutamine 285, and glutamate 299. Positions lysine 133–leucine 328 constitute an ATP-grasp 1 domain. Glutamine 285, glutamate 299, and asparagine 301 together coordinate Mg(2+). The Mn(2+) site is built by glutamine 285, glutamate 299, and asparagine 301. Residues lysine 403–threonine 551 form an oligomerization domain region. The carbamoyl phosphate synthetic domain stretch occupies residues glutamate 552–tyrosine 962. The ATP-grasp 2 domain maps to glycine 681–valine 881. 10 residues coordinate ATP: arginine 717, lysine 765, leucine 767, glutamate 772, glycine 797, valine 798, histidine 799, serine 800, glutamine 840, and glutamate 852. Glutamine 840, glutamate 852, and asparagine 854 together coordinate Mg(2+). The Mn(2+) site is built by glutamine 840, glutamate 852, and asparagine 854. The segment at glutamate 963 to aspartate 1126 is allosteric domain. Positions glycine 964–aspartate 1126 constitute an MGS-like domain.

Belongs to the CarB family. Composed of two chains; the small (or glutamine) chain promotes the hydrolysis of glutamine to ammonia, which is used by the large (or ammonia) chain to synthesize carbamoyl phosphate. Tetramer of heterodimers (alpha,beta)4. It depends on Mg(2+) as a cofactor. Mn(2+) is required as a cofactor.

The enzyme catalyses hydrogencarbonate + L-glutamine + 2 ATP + H2O = carbamoyl phosphate + L-glutamate + 2 ADP + phosphate + 2 H(+). It catalyses the reaction hydrogencarbonate + NH4(+) + 2 ATP = carbamoyl phosphate + 2 ADP + phosphate + 2 H(+). The protein operates within amino-acid biosynthesis; L-arginine biosynthesis; carbamoyl phosphate from bicarbonate: step 1/1. It participates in pyrimidine metabolism; UMP biosynthesis via de novo pathway; (S)-dihydroorotate from bicarbonate: step 1/3. Its function is as follows. Large subunit of the glutamine-dependent carbamoyl phosphate synthetase (CPSase). CPSase catalyzes the formation of carbamoyl phosphate from the ammonia moiety of glutamine, carbonate, and phosphate donated by ATP, constituting the first step of 2 biosynthetic pathways, one leading to arginine and/or urea and the other to pyrimidine nucleotides. The large subunit (synthetase) binds the substrates ammonia (free or transferred from glutamine from the small subunit), hydrogencarbonate and ATP and carries out an ATP-coupled ligase reaction, activating hydrogencarbonate by forming carboxy phosphate which reacts with ammonia to form carbamoyl phosphate. The polypeptide is Carbamoyl phosphate synthase large chain (Bifidobacterium adolescentis (strain ATCC 15703 / DSM 20083 / NCTC 11814 / E194a)).